Reading from the N-terminus, the 176-residue chain is Lipoprotein signal peptidase (176 aa).

Transmembrane regions (helical) follow at residues 26 to 46 (LWLA…IVIV), 57 to 77 (VTGF…SFLA), 82 to 102 (WQRW…VWLL), and 111 to 131 (FCFA…DRVI). Active-site residues include Asp-137 and Asp-155. A helical membrane pass occupies residues 147 to 167 (HWPAFNVADCAITVGAVLLIV).

Belongs to the peptidase A8 family.

The protein resides in the cell inner membrane. It carries out the reaction Release of signal peptides from bacterial membrane prolipoproteins. Hydrolyzes -Xaa-Yaa-Zaa-|-(S,diacylglyceryl)Cys-, in which Xaa is hydrophobic (preferably Leu), and Yaa (Ala or Ser) and Zaa (Gly or Ala) have small, neutral side chains.. It functions in the pathway protein modification; lipoprotein biosynthesis (signal peptide cleavage). In terms of biological role, this protein specifically catalyzes the removal of signal peptides from prolipoproteins. In Cupriavidus taiwanensis (strain DSM 17343 / BCRC 17206 / CCUG 44338 / CIP 107171 / LMG 19424 / R1) (Ralstonia taiwanensis (strain LMG 19424)), this protein is Lipoprotein signal peptidase.